A 274-amino-acid chain; its full sequence is Penicillin-insensitive murein endopeptidase (274 aa).

A signal peptide spans 1-19 (MNKTAIALLALLASSASLA). 3 disulfide bridges follow: Cys44-Cys265, Cys187-Cys235, and Cys216-Cys223. Zn(2+) is bound by residues His110, His113, Asp120, Asp147, His150, and His211. Positions 227–274 (PLPPPGDGCGAELQSWFEPPKPGTTKPEKKTPPPLPPSCQALLDEHVI) are disordered.

It belongs to the peptidase M74 family. Dimer. It depends on Zn(2+) as a cofactor.

The protein resides in the periplasm. Its function is as follows. Murein endopeptidase that cleaves the D-alanyl-meso-2,6-diamino-pimelyl amide bond that connects peptidoglycan strands. Likely plays a role in the removal of murein from the sacculus. The protein is Penicillin-insensitive murein endopeptidase of Escherichia coli O17:K52:H18 (strain UMN026 / ExPEC).